Here is a 492-residue protein sequence, read N- to C-terminus: Ketol-acid reductoisomerase (NADP(+)) (492 aa).

Residues 15 to 208 (AQLGQCRFMD…GGDRAGVLQS (194 aa)) form the KARI N-terminal Rossmann domain. Residues 45–48 (CGAQ), Arg-68, Arg-76, Ser-78, and 108–110 (DKQ) each bind NADP(+). The active site involves His-132. Gly-158 contributes to the NADP(+) binding site. 2 consecutive KARI C-terminal knotted domains span residues 209–353 (SFIA…DEQT) and 354–486 (YFDK…MTDM). 4 residues coordinate Mg(2+): Asp-217, Glu-221, Glu-389, and Glu-393. Ser-414 serves as a coordination point for substrate.

This sequence belongs to the ketol-acid reductoisomerase family. It depends on Mg(2+) as a cofactor.

The enzyme catalyses (2R)-2,3-dihydroxy-3-methylbutanoate + NADP(+) = (2S)-2-acetolactate + NADPH + H(+). The catalysed reaction is (2R,3R)-2,3-dihydroxy-3-methylpentanoate + NADP(+) = (S)-2-ethyl-2-hydroxy-3-oxobutanoate + NADPH + H(+). Its pathway is amino-acid biosynthesis; L-isoleucine biosynthesis; L-isoleucine from 2-oxobutanoate: step 2/4. The protein operates within amino-acid biosynthesis; L-valine biosynthesis; L-valine from pyruvate: step 2/4. Functionally, involved in the biosynthesis of branched-chain amino acids (BCAA). Catalyzes an alkyl-migration followed by a ketol-acid reduction of (S)-2-acetolactate (S2AL) to yield (R)-2,3-dihydroxy-isovalerate. In the isomerase reaction, S2AL is rearranged via a Mg-dependent methyl migration to produce 3-hydroxy-3-methyl-2-ketobutyrate (HMKB). In the reductase reaction, this 2-ketoacid undergoes a metal-dependent reduction by NADPH to yield (R)-2,3-dihydroxy-isovalerate. The polypeptide is Ketol-acid reductoisomerase (NADP(+)) (Shewanella oneidensis (strain ATCC 700550 / JCM 31522 / CIP 106686 / LMG 19005 / NCIMB 14063 / MR-1)).